The sequence spans 612 residues: Chaperone protein DnaK (612 aa).

Thr173 carries the post-translational modification Phosphothreonine; by autocatalysis. The segment at Ala576 to Lys612 is disordered. Residues Asn596–Lys612 are compositionally biased toward acidic residues.

Belongs to the heat shock protein 70 family.

Its function is as follows. Acts as a chaperone. The chain is Chaperone protein DnaK from Bacillus licheniformis (strain ATCC 14580 / DSM 13 / JCM 2505 / CCUG 7422 / NBRC 12200 / NCIMB 9375 / NCTC 10341 / NRRL NRS-1264 / Gibson 46).